We begin with the raw amino-acid sequence, 1181 residues long: MFFYLSKKIAVPNNVKLKCISWNKDQGFIACGGEDGLLKVLRLETQTDDSKLRGLAAPSNLSMNQNLEGHSGAVQVVTWNEQYQKLTTSDQNGLIIVWMLYKGSWYEEMINNRNKSVVRSMSWNADGQKICIVYEDGAVIVGSVDGNRIWGKDLKGIQLCHVTWSADSKILLFGMANGEIHIYDNQGNFIMKMKLNCLVNVTGAISIAGIHWYHGTEGYVEPDCPCLAICFDNGRCQIMRHENDQNPVLIDTGMYVVGIQWNHIGSVLAVAGSQKVVTQDKDINIVQFYTPFGEHLGTLKVPGKQMCSLSWEGGGLKIALAVDSFIYFANIRPDYKWGYCSNTVVYAYTRPDRPEYCVVFWDTKNSEKYVKYVKSLISITTCGDFCILATKADENHPQEENEMETFGATFVLVLCNSIGTPLDPKYIDLVPLFVAMTKTHVIAASKEAFYTWQYRVAKKLTALEINQITRSRKEGRERIYHVDDVPSGSVDGVFDYSKAIQGTRDPICAITASDKTLIVGRESGVIQRYSFPNVALIQKYSLDCRACQLSLNCNSSRLAIIDIAGVLTFFDLDTRVTDSTGQQVVGELLKLERKDVWDMKWAKDNPDLFAMMEKTRMYVFRNLDPEEPIQTSGYICNFEDLEIKSVLLDEILKDPEHPSKDYIMNFEIRSLRDSRALIEKVGIEDASQFIEDNPHPRLWRLLAEAALQKLDLYTAQQAFVRCKDYQGIKFVKLLGNLQSESMKQAEVIAYFGRFEDAERMYQDMDRRDLAIGLRMKLGDWFRVLQLLKTGSGDADDSLLEQANNAIGEYFADRQKWQNAVQYYVKGRNQERLAECYYMLEDYEGLETLANSLPENHKLLPEIAQMFVRVGMCEQAVSAFLKCNQPKAAVDTCVHLNQWNKAVELAKSHSMKEIGSLLARYASHLLEKNKTLDAIELYRKASYFFDAAKLMYKIADEEAKKRTKPLRVKKLYVLSALLIEQYHEQMKNAQRGKVKGKNSEATSALAGLLEEEVLSTTSRFTDNAWRGAEAYHFFILAQRQLYEGYVDTALKTALHLRDYEDIIPSVEIYSLLALCACASRAFGTCSKAFIKLESLETLSAEQKQQYEDLALEIFTKHTPKDNRKSELNSLLEGGEGKLPTCIATGSPIIEYQFWVCKVCKHYVLAQEISNYNFCPLCHSSVE.

WD repeat units follow at residues 12 to 51 (PNNVKLKCISWNKDQGFIACGGEDGLLKVLRLETQTDDSK), 69 to 108 (GHSGAVQVVTWNEQYQKLTTSDQNGLIIVWMLYKGSWYEE), 113 to 152 (RNKSVVRSMSWNADGQKICIVYEDGAVIVGSVDGNRIWGK), 154 to 193 (LKGIQLCHVTWSADSKILLFGMANGEIHIYDNQGNFIMKM), and 502 to 539 (GTRDPICAITASDKTLIVGRESGVIQRYSFPNVALIQK).

Component of the IFT complex A (IFT-A) complex. IFT-A complex is divided into a core subcomplex composed of IFT122:IFT140:WDR19 which is associated with TULP3 and a peripheral subcomplex composed of IFT43:WDR35:TTC21B. Interacts directy with IFT122, ITF43 and TTC21B. Interacts with IFT43. Interacts with CFAP61.

Its subcellular location is the cytoplasm. It localises to the cytoskeleton. The protein resides in the microtubule organizing center. The protein localises to the centrosome. It is found in the cilium axoneme. Its subcellular location is the cilium basal body. Functionally, as a component of the IFT complex A (IFT-A), a complex required for retrograde ciliary transport and entry into cilia of G protein-coupled receptors (GPCRs), it is involved in ciliogenesis and ciliary protein trafficking. May promote CASP3 activation and TNF-stimulated apoptosis. The protein is WD repeat-containing protein 35 of Mus musculus (Mouse).